We begin with the raw amino-acid sequence, 173 residues long: Glucagon family neuropeptides (173 aa).

The N-terminal stretch at 1–22 (MSSKATLALLIYGIIMHYSVYS) is a signal peptide. Positions 23 to 80 (SPLGLNYPNLRLENEVYDEDGNSLPALAFDSDQIAIRSPPSVADDLYTLYYPPEKGTE) are excised as a propeptide. The residue at position 166 (K166) is a Lysine amide. Residues 170–173 (LGYL) constitute a propeptide that is removed on maturation.

Belongs to the glucagon family.

The protein resides in the secreted. Functionally, primary role of GHRH is to release GH from the pituitary. In terms of biological role, PACAP plays pivotal roles as a neurotransmitter and/or a neuromodulator. This chain is Glucagon family neuropeptides, found in Oncorhynchus nerka (Sockeye salmon).